The following is a 199-amino-acid chain: N-(5'-phosphoribosyl)anthranilate isomerase (199 aa).

Belongs to the TrpF family.

The catalysed reaction is N-(5-phospho-beta-D-ribosyl)anthranilate = 1-(2-carboxyphenylamino)-1-deoxy-D-ribulose 5-phosphate. It participates in amino-acid biosynthesis; L-tryptophan biosynthesis; L-tryptophan from chorismate: step 3/5. This Streptococcus pneumoniae (strain ATCC 700669 / Spain 23F-1) protein is N-(5'-phosphoribosyl)anthranilate isomerase.